The sequence spans 188 residues: Methylamine dehydrogenase light chain (188 aa).

Residues Met-1–Ala-57 constitute a signal peptide (tat-type signal). 6 disulfide bridges follow: Cys-80–Cys-145, Cys-86–Cys-118, Cys-93–Cys-178, Cys-95–Cys-143, Cys-103–Cys-134, and Cys-135–Cys-166. The residue at position 114 (Trp-114) is a Tryptophylquinone. A cross-link (tryptophan tryptophylquinone (Trp-Trp)) is located at residues Trp-114–Trp-165.

The protein belongs to the aromatic amine dehydrogenase light chain family. In terms of assembly, heterotetramer of two light and two heavy chains. Tryptophan tryptophylquinone residue is required as a cofactor. Predicted to be exported by the Tat system. The position of the signal peptide cleavage has not been experimentally proven. In terms of processing, tryptophan tryptophylquinone (TTQ) is formed by oxidation of the indole ring of a tryptophan to form tryptophylquinone followed by covalent cross-linking with another tryptophan residue.

It is found in the periplasm. It catalyses the reaction 2 oxidized [amicyanin] + methylamine + H2O = 2 reduced [amicyanin] + formaldehyde + NH4(+) + 2 H(+). Its pathway is one-carbon metabolism; methylamine degradation; formaldehyde from methylamine: step 1/1. Its function is as follows. Methylamine dehydrogenase carries out the oxidation of methylamine. Electrons are passed from methylamine dehydrogenase to amicyanin. The chain is Methylamine dehydrogenase light chain (mauA) from Paracoccus denitrificans.